The following is a 360-amino-acid chain: Photosystem II protein D1 2 (360 aa).

The next 3 helical transmembrane spans lie at 29–46 (YVGW…TATT), 118–133 (HFLI…EWEL), and 142–156 (WICV…AATA). Residue His118 participates in chlorophyll a binding. Tyr126 contributes to the pheophytin a binding site. Residues Asp170 and Glu189 each contribute to the [CaMn4O5] cluster site. Residues 197–218 (FHMLGVAGVFGGSLFSAMHGSL) form a helical membrane-spanning segment. His198 is a binding site for chlorophyll a. Residues His215 and 264–265 (SF) contribute to the a quinone site. His215 provides a ligand contact to Fe cation. His272 is a Fe cation binding site. A helical transmembrane segment spans residues 274 to 288 (FLGAWPVVGIWFTAL). 4 residues coordinate [CaMn4O5] cluster: His332, Glu333, Asp342, and Ala344. The propeptide occupies 345–360 (AGEQAPVALQAPAING).

Belongs to the reaction center PufL/M/PsbA/D family. In terms of assembly, PSII is composed of 1 copy each of membrane proteins PsbA, PsbB, PsbC, PsbD, PsbE, PsbF, PsbH, PsbI, PsbJ, PsbK, PsbL, PsbM, PsbT, PsbX, PsbY, PsbZ, Psb30/Ycf12, peripheral proteins PsbO, CyanoQ (PsbQ), PsbU, PsbV and a large number of cofactors. It forms dimeric complexes. It depends on The D1/D2 heterodimer binds P680, chlorophylls that are the primary electron donor of PSII, and subsequent electron acceptors. It shares a non-heme iron and each subunit binds pheophytin, quinone, additional chlorophylls, carotenoids and lipids. D1 provides most of the ligands for the Mn4-Ca-O5 cluster of the oxygen-evolving complex (OEC). There is also a Cl(-1) ion associated with D1 and D2, which is required for oxygen evolution. The PSII complex binds additional chlorophylls, carotenoids and specific lipids. as a cofactor. Tyr-161 forms a radical intermediate that is referred to as redox-active TyrZ, YZ or Y-Z. Post-translationally, C-terminally processed by CtpA; processing is essential to allow assembly of the oxygen-evolving complex and thus photosynthetic growth.

The protein resides in the cellular thylakoid membrane. The catalysed reaction is 2 a plastoquinone + 4 hnu + 2 H2O = 2 a plastoquinol + O2. In terms of biological role, photosystem II (PSII) is a light-driven water:plastoquinone oxidoreductase that uses light energy to abstract electrons from H(2)O, generating O(2) and a proton gradient subsequently used for ATP formation. It consists of a core antenna complex that captures photons, and an electron transfer chain that converts photonic excitation into a charge separation. The D1/D2 (PsbA/PsbD) reaction center heterodimer binds P680, the primary electron donor of PSII as well as several subsequent electron acceptors. The sequence is that of Photosystem II protein D1 2 from Picosynechococcus sp. (strain ATCC 27264 / PCC 7002 / PR-6) (Agmenellum quadruplicatum).